The primary structure comprises 396 residues: MAKAKFERNKPHCNIGTIGHVDHGKTSLTAAITKVLAETGGATFTAYDQIDKAPEEKARGITISTAHVEYETTNRHYAHVDCPGHADYVKNMITGAAQMDGAILVVSAADGPMPQTREHILLARQVGVPALVVFLNKCDMVDDPELLELVEMEVRELLSKYDFPGDDIPIVKGSALAALENSDAKLGHDAILELMKAVDAYIPQPERPIDQPFLMPVEDVFSISGRGTVVTGRVERGIVKVGEEIEIVGIRDTQKTTCTGVEMFRKLLDQGQAGDNIGCLLRGTKREDVERGQVLCKPGSVKPHTKFKAEAYILTKEEGGRHTPFFTNYRPQFYFRTTDVTGVVHLPEGTEMVMPGDNIAMEVHLIVPIAMEEKLRFAIREGGRTVGAGVVASIIE.

Residues 10-206 (KPHCNIGTIG…AVDAYIPQPE (197 aa)) enclose the tr-type G domain. Positions 19 to 26 (GHVDHGKT) are G1. 19–26 (GHVDHGKT) provides a ligand contact to GTP. T26 lines the Mg(2+) pocket. The interval 60–64 (GITIS) is G2. Residues 81–84 (DCPG) form a G3 region. GTP is bound by residues 81–85 (DCPGH) and 136–139 (NKCD). The interval 136–139 (NKCD) is G4. Residues 174-176 (SAL) form a G5 region.

It belongs to the TRAFAC class translation factor GTPase superfamily. Classic translation factor GTPase family. EF-Tu/EF-1A subfamily. In terms of assembly, monomer.

It is found in the cytoplasm. It carries out the reaction GTP + H2O = GDP + phosphate + H(+). In terms of biological role, GTP hydrolase that promotes the GTP-dependent binding of aminoacyl-tRNA to the A-site of ribosomes during protein biosynthesis. This is Elongation factor Tu 1 from Rhodopseudomonas palustris (strain BisB5).